The sequence spans 148 residues: MKVILLEPLENLGDVGQVVDVKPGYARNYLLPRGLAVLATESNLKALEARIRAQAKRLAERKAEAERLKKILENLTLTIPVRAGETKIYGSVTAKDIAEALSRQHGVTIDPKRLALEKPIKELGEYVLTYKPHPEVPIQLKVSVVAQE.

This sequence belongs to the bacterial ribosomal protein bL9 family.

Its function is as follows. Binds to the 23S rRNA. This chain is Large ribosomal subunit protein bL9, found in Thermus thermophilus.